Reading from the N-terminus, the 1045-residue chain is Mitotic deacetylase-associated SANT domain protein (1045 aa).

Met-1 bears the N-acetylmethionine mark. Disordered regions lie at residues 1–68 and 99–159; these read MNLQ…PPPS and NSVM…PTYY. Residues 132 to 146 are compositionally biased toward polar residues; sequence STWNCHSLSLYSATK. Lys-166 is covalently cross-linked (Glycyl lysine isopeptide (Lys-Gly) (interchain with G-Cter in SUMO2)). Arg-193 carries the post-translational modification Asymmetric dimethylarginine. Disordered stretches follow at residues 228-264, 276-305, 330-349, 378-397, and 410-441; these read QVFRQGPPPPNPVAAFPPQKQQQQQQPQQQQQQQQAA, SMPQQPSQQPQDFGLQPAGPLGQSHLAHHS, APQPALPQVQIPFPRRSRRL, HHWPLQQPPPGSLGQPHPEA, and LPDGERLAPNGREREAPAMGSEEGMRAVSTGD. Residues 240–264 show a composition bias toward low complexity; the sequence is VAAFPPQKQQQQQQPQQQQQQQQAA. The segment covering 412–425 has biased composition (basic and acidic residues); that stretch reads DGERLAPNGREREA. The residue at position 447 (Arg-447) is an Omega-N-methylarginine. Phosphoserine is present on Ser-461. A disordered region spans residues 543 to 563; it reads QAGGLDEDGKGPEQNPAEHKP. Positions 549–563 are enriched in basic and acidic residues; it reads EDGKGPEQNPAEHKP. Residue Lys-590 forms a Glycyl lysine isopeptide (Lys-Gly) (interchain with G-Cter in SUMO1); alternate linkage. Lys-590 participates in a covalent cross-link: Glycyl lysine isopeptide (Lys-Gly) (interchain with G-Cter in SUMO2); alternate. Thr-655 is modified (phosphothreonine). Ser-661 carries the post-translational modification Phosphoserine. A Phosphothreonine modification is found at Thr-704. Ser-709 is modified (phosphoserine). Thr-715 bears the Phosphothreonine mark. The ELM2 domain maps to 721-813; the sequence is PRINVGSRFQ…ETLNKLLLKK (93 aa). An SANT domain is found at 828–879; sequence TGSDQWKMAERKLFNKGIAIYKKDFFLVQKLIQTKTVAQCVEFYYTYKKQVK. The segment at 887 to 1045 is disordered; the sequence is TFGDVDTSDE…NTFPCKKCGR (159 aa). 2 stretches are compositionally biased toward basic and acidic residues: residues 894–909 and 919–942; these read SDEKSAQEEVEVDIKT and PRRESPSEERLEPKREVKEPRKEG. Ser-923 bears the Phosphoserine mark. Positions 943–957 are enriched in acidic residues; that stretch reads EEEVPEIQEKEEQEE. Over residues 970-980 the composition is skewed to polar residues; sequence ATQTLQANESA.

In terms of assembly, interacts with DNTTIP1. Identified in a histone deacetylase complex that contains DNTTIP1, HDAC1 and MIDEAS; this complex assembles into a tetramer that contains four copies of each protein chain.

The protein localises to the nucleus. The sequence is that of Mitotic deacetylase-associated SANT domain protein from Homo sapiens (Human).